Consider the following 202-residue polypeptide: Recombination protein RecR (202 aa).

The segment at 56-71 adopts a C4-type zinc-finger fold; it reads CVVCGTVSDGELCRIC. The region spanning 79-179 is the Toprim domain; that stretch reads TMICVVEEPK…TVTRLASGLP (101 aa).

It belongs to the RecR family.

Functionally, may play a role in DNA repair. It seems to be involved in an RecBC-independent recombinational process of DNA repair. It may act with RecF and RecO. This is Recombination protein RecR from Nocardia farcinica (strain IFM 10152).